The primary structure comprises 570 residues: Periplasmic trehalase (570 aa).

An N-terminal signal peptide occupies residues 1–34 (MIPPEIRRSVLLQKAIKLALAGTLLTFASFSATA). Substrate-binding positions include arginine 159, 166–167 (WD), asparagine 203, 212–214 (RSQ), 284–286 (RPE), and glycine 317. Catalysis depends on proton donor/acceptor residues aspartate 319 and glutamate 503. Glutamate 518 provides a ligand contact to substrate. The interval 545 to 570 (PCDSVPSTRPASLSATPTKTPSAATQ) is disordered. The span at 554-570 (PASLSATPTKTPSAATQ) shows a compositional bias: low complexity.

It belongs to the glycosyl hydrolase 37 family. As to quaternary structure, monomer.

Its subcellular location is the periplasm. It carries out the reaction alpha,alpha-trehalose + H2O = alpha-D-glucose + beta-D-glucose. Provides the cells with the ability to utilize trehalose at high osmolarity by splitting it into glucose molecules that can subsequently be taken up by the phosphotransferase-mediated uptake system. This is Periplasmic trehalase from Salmonella agona (strain SL483).